A 718-amino-acid polypeptide reads, in one-letter code: Exostosin-2 (718 aa).

Residues 1-25 (MCASVKYNIRGPALIPRMKTKHRIY) are Cytoplasmic-facing. A helical; Signal-anchor for type II membrane protein membrane pass occupies residues 26–46 (YITLFSIVLLGLIATGMFQFW). Topologically, residues 47–718 (PHSIESSGDW…LKSFPNIGSL (672 aa)) are lumenal. 4 disulfides stabilise this stretch: C85/C90, C96/C151, C286/C300, and C318/C339. An N-linked (GlcNAc...) asparagine glycan is attached at N288. Residues L461, R465, N490, and N517 each contribute to the UDP site. UDP-N-acetyl-alpha-D-glucosamine is bound by residues R465, N490, N517, R522, D538, D539, and D540. UDP contacts are provided by D538 and D539. D540 contacts Mn(2+). The a protein site is built by Y582 and S584. The cysteines at positions 626 and 676 are disulfide-linked. E627 and D628 together coordinate UDP-N-acetyl-alpha-D-glucosamine. Residue N637 is glycosylated (N-linked (GlcNAc...) asparagine). 2 residues coordinate a protein: K651 and K653. UDP-N-acetyl-alpha-D-glucosamine is bound at residue R673.

Belongs to the glycosyltransferase 47 family. Part of the heparan sulfate polymerase, a dimeric complex composed of EXT1 and EXT2. Could also form homooligomeric complexes. Interacts with NDST1. Interacts with GALNT5. The cofactor is Mn(2+). Post-translationally, a soluble form is generated by proteolytic processing. N-glycosylated at Asn-637.

It is found in the golgi apparatus membrane. It localises to the golgi apparatus. Its subcellular location is the cis-Golgi network membrane. The protein localises to the endoplasmic reticulum membrane. The protein resides in the secreted. The enzyme catalyses 3-O-{[(1-&gt;4)-beta-D-GlcA-(1-&gt;4)-alpha-D-GlcNAc](n)-(1-&gt;4)-beta-D-GlcA-(1-&gt;3)-beta-D-Gal-(1-&gt;3)-beta-D-Gal-(1-&gt;4)-beta-D-Xyl}-L-seryl-[protein] + UDP-N-acetyl-alpha-D-glucosamine = 3-O-{alpha-D-GlcNAc-[(1-&gt;4)-beta-D-GlcA-(1-&gt;4)-alpha-D-GlcNAc](n)-(1-&gt;4)-beta-D-GlcA-(1-&gt;3)-beta-D-Gal-(1-&gt;3)-beta-D-Gal-(1-&gt;4)-beta-D-Xyl}-L-seryl-[protein] + UDP + H(+). It participates in protein modification; protein glycosylation. Glycosyltransferase forming with EXT1 the heterodimeric heparan sulfate polymerase which catalyzes the elongation of the heparan sulfate glycan backbone. Glycan backbone extension consists in the alternating transfer of (1-&gt;4)-beta-D-GlcA and (1-&gt;4)-alpha-D-GlcNAc residues from their respective UDP-sugar donors. Both EXT1 and EXT2 are required for the full activity of the polymerase since EXT1 bears the N-acetylglucosaminyl-proteoglycan 4-beta-glucuronosyltransferase activity within the complex while EXT2 carries the glucuronosyl-N-acetylglucosaminyl-proteoglycan 4-alpha-N-acetylglucosaminyltransferase activity. Heparan sulfate proteoglycans are ubiquitous components of the extracellular matrix and play an important role in tissue homeostasis and signaling. This is Exostosin-2 from Bos taurus (Bovine).